Here is a 441-residue protein sequence, read N- to C-terminus: Fibroleukin (441 aa).

A signal peptide spans 1-15; that stretch reads MKLANWCWLSSTVLA. A glycan (N-linked (GlcNAc...) asparagine) is linked at N25. Residues 73–167 adopt a coiled-coil conformation; the sequence is SRIEEVFKEV…LEKLNLVNMN (95 aa). The interval 102 to 128 is disordered; it reads QADDSRDPGRNGLLLPGTGAPGETGDN. N-linked (GlcNAc...) asparagine glycosylation is found at N179, N237, N265, and N338. A Fibrinogen C-terminal domain is found at 206–438; sequence VQQHLIYKDC…EVKMMIRPKH (233 aa).

As to quaternary structure, homotetramer; disulfide-linked.

Its subcellular location is the secreted. Functionally, may play a role in physiologic lymphocyte functions at mucosal sites. This Bos taurus (Bovine) protein is Fibroleukin (FGL2).